The primary structure comprises 418 residues: ATP phosphoribosyltransferase regulatory subunit (418 aa).

Belongs to the class-II aminoacyl-tRNA synthetase family. HisZ subfamily. As to quaternary structure, heteromultimer composed of HisG and HisZ subunits.

The protein resides in the cytoplasm. The protein operates within amino-acid biosynthesis; L-histidine biosynthesis; L-histidine from 5-phospho-alpha-D-ribose 1-diphosphate: step 1/9. Functionally, required for the first step of histidine biosynthesis. May allow the feedback regulation of ATP phosphoribosyltransferase activity by histidine. In Halothermothrix orenii (strain H 168 / OCM 544 / DSM 9562), this protein is ATP phosphoribosyltransferase regulatory subunit.